An 822-amino-acid polypeptide reads, in one-letter code: AP-1 complex subunit gamma-1 (822 aa).

The segment at 597 to 628 (EIVQTNGETEPAPLETKPPPSGPQPTSQANDL) is disordered. Residues 702-817 (AGIPSITAYS…QDLAEVNNFP (116 aa)) enclose the GAE domain.

Belongs to the adaptor complexes large subunit family. Adaptor protein complex 1 (AP-1) is a heterotetramer composed of two large adaptins (gamma-type subunit AP1G1 and beta-type subunit AP1B1), a medium adaptin (mu-type subunit AP1M1 or AP1M2) and a small adaptin (sigma-type subunit AP1S1 or AP1S2 or AP1S3). Interacts (via GAE domain) with RABEP1. Interacts with EPS15. Interacts with SYNRG/gamma-synergin. Interacts (via GAE domain) with AP1AR (via coiled-coil domain). Interacts with CLN3 (via dileucine motif); this interaction facilitates lysosomal targeting. Interacts (via GAE domain) with AFTPH/aftiphilin; the interaction is required to recruit AFTPH/aftiphilin to the perinuclear region of the cell.

It localises to the golgi apparatus. The protein resides in the cytoplasmic vesicle. It is found in the clathrin-coated vesicle membrane. Its subcellular location is the cytoplasm. The protein localises to the perinuclear region. It localises to the clathrin-coated vesicle. The protein resides in the membrane. It is found in the clathrin-coated pit. Subunit of clathrin-associated adaptor protein complex 1 that plays a role in protein sorting in the late-Golgi/trans-Golgi network (TGN) and/or endosomes. The AP complexes mediate both the recruitment of clathrin to membranes and the recognition of sorting signals within the cytosolic tails of transmembrane cargo molecules. In association with AFTPH/aftiphilin in the aftiphilin/p200/gamma-synergin complex, involved in the trafficking of transferrin from early to recycling endosomes, and the membrane trafficking of furin and the lysosomal enzyme cathepsin D between the trans-Golgi network (TGN) and endosomes. The sequence is that of AP-1 complex subunit gamma-1 (AP1G1) from Pongo abelii (Sumatran orangutan).